Here is a 400-residue protein sequence, read N- to C-terminus: Ribosomal RNA large subunit methyltransferase I (400 aa).

One can recognise a PUA domain in the interval 6–84 (FPRLVLAKGR…NEAIDSAFFE (79 aa)).

This sequence belongs to the methyltransferase superfamily. RlmI family.

It localises to the cytoplasm. It catalyses the reaction cytidine(1962) in 23S rRNA + S-adenosyl-L-methionine = 5-methylcytidine(1962) in 23S rRNA + S-adenosyl-L-homocysteine + H(+). Specifically methylates the cytosine at position 1962 (m5C1962) of 23S rRNA. The sequence is that of Ribosomal RNA large subunit methyltransferase I from Klebsiella pneumoniae (strain 342).